Here is a 247-residue protein sequence, read N- to C-terminus: 5'-nucleotidase SurE (247 aa).

4 residues coordinate a divalent metal cation: Asp-8, Asp-9, Ser-39, and Asn-95.

It belongs to the SurE nucleotidase family. It depends on a divalent metal cation as a cofactor.

It is found in the cytoplasm. The enzyme catalyses a ribonucleoside 5'-phosphate + H2O = a ribonucleoside + phosphate. In terms of biological role, nucleotidase that shows phosphatase activity on nucleoside 5'-monophosphates. This chain is 5'-nucleotidase SurE, found in Thermotoga petrophila (strain ATCC BAA-488 / DSM 13995 / JCM 10881 / RKU-1).